The following is a 159-amino-acid chain: Endoribonuclease YbeY (159 aa).

The Zn(2+) site is built by H125, H129, and H135.

This sequence belongs to the endoribonuclease YbeY family. Zn(2+) serves as cofactor.

It localises to the cytoplasm. Functionally, single strand-specific metallo-endoribonuclease involved in late-stage 70S ribosome quality control and in maturation of the 3' terminus of the 16S rRNA. This is Endoribonuclease YbeY from Enterococcus faecalis (strain ATCC 700802 / V583).